The sequence spans 23 residues: Toxin Acra2 (23 aa).

Residues 2 to 23 (KDGYIVDSNGCAPECFPTNXGC) enclose the LCN-type CS-alpha/beta domain.

Contains 4 disulfide bonds. In terms of tissue distribution, expressed by the venom gland.

It localises to the secreted. Functionally, excitatory insect toxins induce a spastic paralysis. They bind voltage-independently at site-4 of sodium channels (Nav) and shift the voltage of activation toward more negative potentials thereby affecting sodium channel activation and promoting spontaneous and repetitive firing. Is lethal to mice. Is about 1% of the total protein in the venom. The polypeptide is Toxin Acra2 (Androctonus crassicauda (Arabian fat-tailed scorpion)).